We begin with the raw amino-acid sequence, 591 residues long: Protein CBFA2T3 (591 aa).

Residues Met-1 to Gln-105 form a disordered region. The segment at Met-1 to Ile-381 is mediates localization to the nucleus. Pro residues predominate over residues Ser-41 to Ala-52. A compositionally biased stretch (polar residues) spans Gln-55 to Gln-105. Residues Ala-112 to Glu-207 form the TAFH domain. Disordered regions lie at residues Leu-226–His-291 and Asp-386–Pro-420. The segment covering Glu-230–Ser-256 has biased composition (basic and acidic residues). Residues Ser-263 to Leu-274 are compositionally biased toward polar residues. Pro residues predominate over residues Asn-279–Gln-290. Over residues Ser-394 to Pro-410 the composition is skewed to low complexity. The stretch at Arg-433 to Leu-488 forms a coiled coil. Residues Cys-501, Cys-504, Cys-512, Cys-515, Cys-521, Cys-525, His-533, and Cys-537 each contribute to the Zn(2+) site. An MYND-type zinc finger spans residues Cys-501–Cys-537. Residues Ser-548 to Arg-591 are disordered. Residues Pro-560 to Pro-585 show a composition bias toward low complexity.

This sequence belongs to the CBFA2T family.

It is found in the nucleus. It localises to the nucleolus. The protein resides in the nucleoplasm. Its subcellular location is the golgi apparatus. Its function is as follows. Functions as a transcriptional repressor. Regulates the proliferation and the differentiation of erythroid progenitors. Plays a role in granulocyte differentiation. May also function as an A-kinase-anchoring protein. This chain is Protein CBFA2T3 (CBFA2T3), found in Gallus gallus (Chicken).